The sequence spans 224 residues: UPF0111 protein CT_691 (224 aa).

The protein belongs to the UPF0111 family.

The sequence is that of UPF0111 protein CT_691 from Chlamydia trachomatis serovar D (strain ATCC VR-885 / DSM 19411 / UW-3/Cx).